A 408-amino-acid chain; its full sequence is Tripartite motif containing 13 (408 aa).

An RING-type zinc finger spans residues 10–58; the sequence is CPICCSLFDDPRVLPCSHNFCKKCLDGVLEENSRTMQWRPSSFKCPTCR. A B box-type zinc finger spans residues 89 to 131; that stretch reads PKMPVCKEHSDQPLNIFCSTDLKLICGSCATTGEHKKHVFSSI. The Zn(2+) site is built by Cys-94, His-97, Cys-117, and His-123. A helical transmembrane segment spans residues 322–342; that stretch reads ILVVACLILLLVTFLCAYPFI.

It localises to the endoplasmic reticulum membrane. It participates in protein modification; protein ubiquitination. Its function is as follows. E3 ubiquitin ligase involved in the retrotranslocation and turnover of membrane and secretory proteins from the ER through a set of processes named ER-associated degradation (ERAD). This process acts on misfolded proteins as well as in the regulated degradation of correctly folded proteins. The chain is Tripartite motif containing 13 (trim13) from Xenopus tropicalis (Western clawed frog).